A 259-amino-acid chain; its full sequence is Ferritin-3, chloroplastic (259 aa).

The transit peptide at 1–49 directs the protein to the chloroplast; sequence MLLKAASTFSLLNIHGEKKDISPLFSSSSSISSPVSSGKSGNLSFPLRA. Residues 50 to 88 are extension peptide (EP); sequence SKSSTTTTSTLSGVVFEPFEEVKKEMDLVPSGQQLSLAR. The 154-residue stretch at 89 to 242 folds into the Ferritin-like diiron domain; the sequence is HLYSPECEAA…EYVSQLRRLG (154 aa). Fe cation-binding residues include Glu106, Glu141, His144, Glu190, and Gln224.

This sequence belongs to the ferritin family. Oligomer of 24 subunits. There are two types of subunits: L (light) chain and H (heavy) chain. The major chain can be light or heavy, depending on the species and tissue type. The functional molecule forms a roughly spherical shell with a diameter of 12 nm and contains a central cavity into which the insoluble mineral iron core is deposited.

The protein resides in the plastid. It is found in the chloroplast. The enzyme catalyses 4 Fe(2+) + O2 + 4 H(+) = 4 Fe(3+) + 2 H2O. Stores iron in a soluble, non-toxic, readily available form. Important for iron homeostasis. Has ferroxidase activity. Iron is taken up in the ferrous form and deposited as ferric hydroxides after oxidation. The sequence is that of Ferritin-3, chloroplastic (FER3) from Arabidopsis thaliana (Mouse-ear cress).